Here is a 103-residue protein sequence, read N- to C-terminus: Large ribosomal subunit protein eL14 (103 aa).

Belongs to the eukaryotic ribosomal protein eL14 family.

In Pyrobaculum islandicum (strain DSM 4184 / JCM 9189 / GEO3), this protein is Large ribosomal subunit protein eL14.